A 642-amino-acid chain; its full sequence is Probable serine/threonine-protein kinase drkA (642 aa).

Residues 1–23 (MKKLPFLIIIIYIFLILISISSS) form the signal peptide. Residues 24–322 (IDYNYNNDID…KPTISLLKKY (299 aa)) lie on the Extracellular side of the membrane. The segment covering 106-128 (SENSGSGSNSNSNSKNTDSSTGP) has biased composition (low complexity). Positions 106-136 (SENSGSGSNSNSNSKNTDSSTGPTPSPISIN) are disordered. 5 N-linked (GlcNAc...) asparagine glycosylation sites follow: Asn-136, Asn-140, Asn-158, Asn-244, and Asn-271. The chain crosses the membrane as a helical span at residues 323–343 (LIIGFSIVGGLLIIGGCFLLI). Over 344 to 642 (RNRYRSSGYY…SDLQYVRQQL (299 aa)) the chain is Cytoplasmic. Positions 374-627 (IKIGVRIGKG…EQCLERLESI (254 aa)) constitute a Protein kinase domain. ATP-binding positions include 380–388 (IGKGNYGEV) and Lys-401. Asp-497 serves as the catalytic Proton acceptor.

It belongs to the protein kinase superfamily. TKL Ser/Thr protein kinase family.

The protein resides in the membrane. It carries out the reaction L-seryl-[protein] + ATP = O-phospho-L-seryl-[protein] + ADP + H(+). The catalysed reaction is L-threonyl-[protein] + ATP = O-phospho-L-threonyl-[protein] + ADP + H(+). The sequence is that of Probable serine/threonine-protein kinase drkA (drkA) from Dictyostelium discoideum (Social amoeba).